A 236-amino-acid chain; its full sequence is 2,3,4,5-tetrahydropyridine-2,6-dicarboxylate N-acetyltransferase (236 aa).

The protein belongs to the transferase hexapeptide repeat family. DapH subfamily.

The enzyme catalyses (S)-2,3,4,5-tetrahydrodipicolinate + acetyl-CoA + H2O = L-2-acetamido-6-oxoheptanedioate + CoA. It participates in amino-acid biosynthesis; L-lysine biosynthesis via DAP pathway; LL-2,6-diaminopimelate from (S)-tetrahydrodipicolinate (acetylase route): step 1/3. In terms of biological role, catalyzes the transfer of an acetyl group from acetyl-CoA to tetrahydrodipicolinate. This chain is 2,3,4,5-tetrahydropyridine-2,6-dicarboxylate N-acetyltransferase, found in Pediococcus pentosaceus (strain ATCC 25745 / CCUG 21536 / LMG 10740 / 183-1w).